We begin with the raw amino-acid sequence, 245 residues long: Nodulation protein G (245 aa).

11–35 (VTGASGAIGGAIARVLHAQGAIVGL) is a binding site for NAD(+). Serine 139 contacts substrate. The active-site Proton acceptor is the tyrosine 152.

Belongs to the short-chain dehydrogenases/reductases (SDR) family.

In terms of biological role, proposed to modify Nod factor fatty acyl chain. The chain is Nodulation protein G (nodG) from Rhizobium meliloti (strain 1021) (Ensifer meliloti).